The following is a 592-amino-acid chain: Pectinesterase/pectinesterase inhibitor 3 (592 aa).

Residues methionine 1–valine 35 form the signal peptide. Residues alanine 36–lysine 238 constitute a propeptide, removed in mature 42 kDa form. Positions alanine 36–leucine 273 are cleaved as a propeptide — removed in mature 38 kDa form. Residues proline 53–methionine 212 are pectinesterase inhibitor 3. N-linked (GlcNAc...) asparagine glycosylation is found at asparagine 96 and asparagine 215. The pectinesterase 3 stretch occupies residues aspartate 281–glycine 578. Positions 356 and 386 each coordinate substrate. Catalysis depends on aspartate 409, which acts as the Proton donor; for pectinesterase activity. Cysteines 423 and 443 form a disulfide. Aspartate 430 functions as the Nucleophile; for pectinesterase activity in the catalytic mechanism. 3 residues coordinate substrate: glutamine 454, arginine 498, and tryptophan 500.

The protein in the N-terminal section; belongs to the PMEI family. This sequence in the C-terminal section; belongs to the pectinesterase family. Interacts with BIIDXI and At5g11420. Binds reversibly to PMEI4, PMEI7 and PMEI8 to be inhibited; the stability of the PME3-PMEIs complexes and the inhibition of the pectin methylesterase (PME) activity is pH-dependent, based on protonation status of amino-acids at the complex interface. As to expression, expressed in roots, cotyledons, hypocotyls, seedlings, leaves, stems, flowers, dry seeds and siliques. Accumulates in etiolated hypocotyls (at protein level).

It is found in the secreted. It localises to the extracellular space. The protein localises to the apoplast. The protein resides in the cell wall. The catalysed reaction is [(1-&gt;4)-alpha-D-galacturonosyl methyl ester](n) + n H2O = [(1-&gt;4)-alpha-D-galacturonosyl](n) + n methanol + n H(+). Its pathway is glycan metabolism; pectin degradation; 2-dehydro-3-deoxy-D-gluconate from pectin: step 1/5. Its activity is regulated as follows. Regulated negatively by pectinesterase inhibitors (e.g. PMEI3, PMEI4, PMEI7 and PMEI9) in a pH-dependent manner, mainly in slightly acidic conditions (pH 6.0 and 5.0), especially in dark-grown hypocotyls; this processus relies on changes in the protonation of amino acids involved in intermolecular and intramolecular interactions. Functionally, acts in the modification of cell walls via demethylesterification of cell wall pectin. Required for zinc Zn(2+) homeostasis and to monitor Zn(2+) influence on cell wall-controlled growth processes such as root cell elongation. Monitors seed germination and favors root hairs production. Prevents cruciferin seed storage proteins activity, but promotes the expression of genes involved in cell wall organization and remodeling as well as genes involved in lipid and protein metabolism, during post-germinative growth of seedlings. Confers sensitivity to Zn(2+) when overexpressed. Acts as a susceptibility factor required for the initial colonization of the host tissue by virulent pathogens including Botrytis cinerea and Pectobacterium carotovorum, probably by facilitating cell wall pectine degradation by pathogen pectic enzymes after its demethylesterification. This chain is Pectinesterase/pectinesterase inhibitor 3, found in Arabidopsis thaliana (Mouse-ear cress).